We begin with the raw amino-acid sequence, 357 residues long: (4E)-oxalomesaconate Delta-isomerase (357 aa).

The protein belongs to the PrpF family.

The catalysed reaction is (1E)-4-oxobut-1-ene-1,2,4-tricarboxylate = (3Z)-2-oxo-4-carboxy-3-hexenedioate. The protein operates within secondary metabolite metabolism; lignin degradation. In terms of biological role, contributes to the degradation of lignin at the level of the protocatechuate 4,5-cleavage pathway. Catalyzes the isomerization of the double bond between C4 and C5 in (4E)-oxalomesaconate (OMA) to (3Z)-2-keto-4-carboxy-3-hexenedioate (KCH), where the double bond has migrated between C3 and C4 via a 1,3-allylic isomerization. This Novosphingobium sp. (strain KA1) (Sphingomonas sp. (strain KA1)) protein is (4E)-oxalomesaconate Delta-isomerase.